Reading from the N-terminus, the 498-residue chain is Protein nucleotidyltransferase YdiU (498 aa).

ATP-binding residues include Gly88, Gly90, Arg91, Lys111, Asp123, Gly124, Arg174, and Arg181. Asp250 acts as the Proton acceptor in catalysis. Mg(2+) is bound by residues Asn251 and Asp260. An ATP-binding site is contributed by Asp260.

Belongs to the SELO family. The cofactor is Mg(2+). Mn(2+) is required as a cofactor.

The enzyme catalyses L-seryl-[protein] + ATP = 3-O-(5'-adenylyl)-L-seryl-[protein] + diphosphate. It carries out the reaction L-threonyl-[protein] + ATP = 3-O-(5'-adenylyl)-L-threonyl-[protein] + diphosphate. It catalyses the reaction L-tyrosyl-[protein] + ATP = O-(5'-adenylyl)-L-tyrosyl-[protein] + diphosphate. The catalysed reaction is L-histidyl-[protein] + UTP = N(tele)-(5'-uridylyl)-L-histidyl-[protein] + diphosphate. The enzyme catalyses L-seryl-[protein] + UTP = O-(5'-uridylyl)-L-seryl-[protein] + diphosphate. It carries out the reaction L-tyrosyl-[protein] + UTP = O-(5'-uridylyl)-L-tyrosyl-[protein] + diphosphate. Nucleotidyltransferase involved in the post-translational modification of proteins. It can catalyze the addition of adenosine monophosphate (AMP) or uridine monophosphate (UMP) to a protein, resulting in modifications known as AMPylation and UMPylation. The polypeptide is Protein nucleotidyltransferase YdiU (Methylorubrum populi (strain ATCC BAA-705 / NCIMB 13946 / BJ001) (Methylobacterium populi)).